The following is a 182-amino-acid chain: NADH-quinone oxidoreductase subunit I (182 aa).

4Fe-4S ferredoxin-type domains are found at residues 50 to 82 (IILSRDPDGDERCVACNLCAVACPVGCISLQKA) and 92 to 121 (EFFRINFSRCIFCGLCEEACPTTAIQMTPD). Residues Cys-62, Cys-65, Cys-68, Cys-72, Cys-101, Cys-104, Cys-107, and Cys-111 each coordinate [4Fe-4S] cluster.

The protein belongs to the complex I 23 kDa subunit family. NDH-1 is composed of 14 different subunits. Subunits NuoA, H, J, K, L, M, N constitute the membrane sector of the complex. It depends on [4Fe-4S] cluster as a cofactor.

The protein localises to the cell inner membrane. The enzyme catalyses a quinone + NADH + 5 H(+)(in) = a quinol + NAD(+) + 4 H(+)(out). In terms of biological role, NDH-1 shuttles electrons from NADH, via FMN and iron-sulfur (Fe-S) centers, to quinones in the respiratory chain. The immediate electron acceptor for the enzyme in this species is believed to be ubiquinone. Couples the redox reaction to proton translocation (for every two electrons transferred, four hydrogen ions are translocated across the cytoplasmic membrane), and thus conserves the redox energy in a proton gradient. This chain is NADH-quinone oxidoreductase subunit I, found in Psychrobacter arcticus (strain DSM 17307 / VKM B-2377 / 273-4).